An 875-amino-acid polypeptide reads, in one-letter code: GATOR2 complex protein MIOS (875 aa).

6 WD repeats span residues 58-100 (SDTP…NSKF), 111-155 (KHAR…TPDI), 182-221 (GQNDACLSLCWLPRDQKLLLAGMHRNLAIFDLRNTSQKMF), 223-261 (NTKAVQGVTVDPYFHDRVASFYEGQVAIWDLRKFEKPVL), 265-306 (EQPK…TPIG), and 395-437 (RLRA…KQYT). Residues 735–781 (VSCNFCGKSISYSCSAVPHQGRGFSQYGVSGSPTKSKVTSCPGCRKP) form a C4-type zinc finger. Cys737 and Cys740 together coordinate Zn(2+). A phosphoserine mark is found at Ser759 and Ser766. The Zn(2+) site is built by Cys775, Cys778, Cys788, Cys827, Cys830, His832, His835, His838, Cys849, Cys854, and Cys858. The RING-type; atypical zinc-finger motif lies at 782–863 (LPRCALCLIN…CTCKCMQLDT (82 aa)).

Belongs to the WD repeat mio family. As to quaternary structure, component of the GATOR2 subcomplex, composed of MIOS, SEC13, SEH1L, WDR24 and WDR59. The GATOR2 complex interacts with CASTOR1 and CASTOR2; the interaction is negatively regulated by arginine. CASTOR1 and CASTOR2 convey leucine availability via direct interaction with MIOS. The GATOR2 complex interacts with SESN1, SESN2 and SESN3; the interaction is negatively regulated by amino acids. Interacts with SAR1A and SAR1B; the interaction is direct, disrupted by leucine and mediates the interaction of SAR1A or SAR1B with the GATOR2 complex to negatively regulate the TORC1 signaling upon leucine deprivation.

The protein localises to the lysosome membrane. With respect to regulation, the GATOR2 complex is negatively regulated by the upstream amino acid sensors CASTOR1 and SESN2, which sequester the GATOR2 complex in absence of amino acids. In the presence of abundant amino acids, GATOR2 is released from CASTOR1 and SESN2 and activated. Functionally, as a component of the GATOR2 complex, functions as an activator of the amino acid-sensing branch of the mTORC1 signaling pathway. The GATOR2 complex indirectly activates mTORC1 through the inhibition of the GATOR1 subcomplex. GATOR2 probably acts as an E3 ubiquitin-protein ligase toward GATOR1. In the presence of abundant amino acids, the GATOR2 complex mediates ubiquitination of the NPRL2 core component of the GATOR1 complex, leading to GATOR1 inactivation. In the absence of amino acids, GATOR2 is inhibited, activating the GATOR1 complex. Within the GATOR2 complex, MIOS is required to prevent autoubiquitination of WDR24, the catalytic subunit of the complex. The GATOR2 complex is required for brain myelination. The chain is GATOR2 complex protein MIOS from Homo sapiens (Human).